The following is a 402-amino-acid chain: Baeyer-Villiger oxidase notM (402 aa).

This sequence belongs to the questin oxidase family.

Functionally, baeyer-Villiger oxidase; part of the gene cluster that mediates the biosynthesis of notoamide, a fungal indole alkaloid that belongs to a family of natural products containing a characteristic bicyclo[2.2.2]diazaoctane core. The first step of notoamide biosynthesis involves coupling of L-proline and L-tryptophan by the bimodular NRPS notE, to produce cyclo-L-tryptophan-L-proline called brevianamide F. The reverse prenyltransferase notF then acts as a deoxybrevianamide E synthase and converts brevianamide F to deoxybrevianamide E via reverse prenylation at C-2 of the indole ring leading to the bicyclo[2.2.2]diazaoctane core. Deoxybrevianamide E is further hydroxylated at C-6 of the indole ring, likely catalyzed by the cytochrome P450 monooxygenase notG, to yield 6-hydroxy-deoxybrevianamide E. 6-hydroxy-deoxybrevianamide E is a specific substrate of the prenyltransferase notC for normal prenylation at C-7 to produce 6-hydroxy-7-prenyl-deoxybrevianamide, also called notoamide S. As the proposed pivotal branching point in notoamide biosynthesis, notoamide S can be diverted to notoamide E through an oxidative pyran ring closure putatively catalyzed by either notH cytochrome P450 monooxygenase or the notD FAD-linked oxidoreductase. This step would be followed by an indole 2,3-epoxidation-initiated pinacol-like rearrangement catalyzed by the notB FAD-dependent monooxygenase leading to the formation of notoamide C and notoamide D. On the other hand notoamide S is converted to notoamide T by notH (or notD), a bifunctional oxidase that also functions as the intramolecular Diels-Alderase responsible for generation of (+)-notoamide T. To generate antipodal (-)-notoaminide T, notH' (or notD') in Aspergillus versicolor is expected to catalyze a Diels-Alder reaction leading to the opposite stereochemistry. The remaining oxidoreductase notD (or notH) likely catalyzes the oxidative pyran ring formation to yield (+)-stephacidin A. The FAD-dependent monooxygenase notI is highly similar to notB and is predicted to catalyze a similar conversion from (+)-stephacidin A to (-)-notoamide B via the 2,3-epoxidation of (+)-stephacidin A followed by a pinacol-type rearrangement. Finally, it remains unclear which enzyme could be responsible for the final hydroxylation steps leading to notoamide A and sclerotiamide. The function of notM in the notoamide biosynthesis has not been determined yet. In Aspergillus sp. (strain MF297-2), this protein is Baeyer-Villiger oxidase notM.